We begin with the raw amino-acid sequence, 461 residues long: Ig heavy chain C region, membrane-bound form (461 aa).

Positions 1 to 99 (ATPSPPTLYG…GESVWIKEIP (99 aa)) are CH1. Positions 100–205 (DCKGDKVHPT…TQSRNITGSQ (106 aa)) are CH2. Asn-164, Asn-200, Asn-245, Asn-275, Asn-374, Asn-411, Asn-415, and Asn-437 each carry an N-linked (GlcNAc...) asparagine glycan. Residues 206 to 308 (VPCSCNDPVI…PLRASIHKEE (103 aa)) form a CH3 region. The tract at residues 309 to 418 (VKDLREPSVS…IINRTVNKSS (110 aa)) is CH4. Residues 438 to 458 (ASTFIILFFLSIFYRAAVTLV) traverse the membrane as a helical segment.

The protein localises to the cell membrane. This is Ig heavy chain C region, membrane-bound form from Heterodontus francisci (Horn shark).